The chain runs to 315 residues: Homoserine kinase (315 aa).

97–107 is a binding site for ATP; sequence PPARGLGSSAT.

The protein belongs to the GHMP kinase family. Homoserine kinase subfamily.

The protein resides in the cytoplasm. It carries out the reaction L-homoserine + ATP = O-phospho-L-homoserine + ADP + H(+). The protein operates within amino-acid biosynthesis; L-threonine biosynthesis; L-threonine from L-aspartate: step 4/5. In terms of biological role, catalyzes the ATP-dependent phosphorylation of L-homoserine to L-homoserine phosphate. This chain is Homoserine kinase, found in Prochlorococcus marinus subsp. pastoris (strain CCMP1986 / NIES-2087 / MED4).